An 805-amino-acid polypeptide reads, in one-letter code: Probable phosphoketolase (805 aa).

Belongs to the XFP family. Thiamine diphosphate is required as a cofactor.

This is Probable phosphoketolase from Synechocystis sp. (strain ATCC 27184 / PCC 6803 / Kazusa).